The following is a 773-amino-acid chain: Photosystem I P700 chlorophyll a apoprotein A1 (773 aa).

The tract at residues 1-27 (MTISPPERGEKAKGAAPTPYDQPVDRD) is disordered. Transmembrane regions (helical) follow at residues 80 to 103 (IFSA…FHGA), 166 to 189 (LMAL…YHYH), 205 to 229 (LQHH…HIGA), 315 to 333 (ISHH…GHMW), 375 to 398 (WHGQ…HHMY), 414 to 440 (LGLF…IAMI), 462 to 484 (AIIS…LYIH), and 564 to 582 (LMIH…LILL). The [4Fe-4S] cluster site is built by cysteine 606 and cysteine 615. 2 consecutive transmembrane segments (helical) span residues 622–643 (HVFL…HFSW) and 687–709 (ISMY…MFLF). Residue histidine 698 coordinates divinylchlorophyll a'. Residues methionine 706 and tyrosine 714 each contribute to the divinyl chlorophyll a site. Phylloquinone is bound at residue tryptophan 715. A helical membrane pass occupies residues 747-767 (AVGVAHFLLGGIATTWAFFHA).

The protein belongs to the PsaA/PsaB family. The PsaA/B heterodimer binds the P700 divinyl chlorophyll special pair and subsequent electron acceptors. PSI consists of a core antenna complex that captures photons, and an electron transfer chain that converts photonic excitation into a charge separation. The cyanobacterial PSI reaction center is composed of one copy each of PsaA,B,C,D,E,F,I,J,K,L,M and X, and forms trimeric complexes. Requires PSI electron transfer chain: 5 divinyl chlorophyll a, 1 divinyl chlorophyll a', 2 phylloquinones and 3 4Fe-4S clusters. PSI core antenna: 90 divinyl chlorophyll a, 22 carotenoids, 3 phospholipids and 1 galactolipid. P700 is a divinyl chlorophyll a/divinyl chlorophyll a' dimer, A0 is one or more divinylchlorophyll a, A1 is one or both phylloquinones and FX is a shared 4Fe-4S iron-sulfur center. as cofactor.

The protein localises to the cellular thylakoid membrane. It carries out the reaction reduced [plastocyanin] + hnu + oxidized [2Fe-2S]-[ferredoxin] = oxidized [plastocyanin] + reduced [2Fe-2S]-[ferredoxin]. Functionally, psaA and PsaB bind P700, the primary electron donor of photosystem I (PSI), as well as the electron acceptors A0, A1 and FX. PSI is a plastocyanin/cytochrome c6-ferredoxin oxidoreductase, converting photonic excitation into a charge separation, which transfers an electron from the donor P700 chlorophyll pair to the spectroscopically characterized acceptors A0, A1, FX, FA and FB in turn. Oxidized P700 is reduced on the lumenal side of the thylakoid membrane by plastocyanin or cytochrome c6. In Prochlorococcus marinus (strain SARG / CCMP1375 / SS120), this protein is Photosystem I P700 chlorophyll a apoprotein A1.